Reading from the N-terminus, the 85-residue chain is UPF0335 protein BQ12070 (85 aa).

Belongs to the UPF0335 family.

The chain is UPF0335 protein BQ12070 from Bartonella quintana (strain Toulouse) (Rochalimaea quintana).